The primary structure comprises 212 residues: 3-isopropylmalate dehydratase small subunit (212 aa).

It belongs to the LeuD family. LeuD type 1 subfamily. Heterodimer of LeuC and LeuD.

It catalyses the reaction (2R,3S)-3-isopropylmalate = (2S)-2-isopropylmalate. The protein operates within amino-acid biosynthesis; L-leucine biosynthesis; L-leucine from 3-methyl-2-oxobutanoate: step 2/4. Catalyzes the isomerization between 2-isopropylmalate and 3-isopropylmalate, via the formation of 2-isopropylmaleate. In Dechloromonas aromatica (strain RCB), this protein is 3-isopropylmalate dehydratase small subunit.